A 990-amino-acid polypeptide reads, in one-letter code: MFCYSSLHAQIISGTVSAEGQVLPGAAVIIKGSTKGTSTDFDGYYTIEAQASDVLVFSYVGYANKEVTVGTNTQIDVALEADNTLDEVVVIGYGTQRKSDLTGSVSSVSAEDVNVNPVSRVDQALQGRAAGVQVTQTSGAPGAASVIRVRGGNSITGSNEPLWVIDGIVVGTNFNLNNINSNDIKSIEILKDASSIAIYGSRGANGVVLVTTKTGTGAGSSKPEVSANIYTSMQMVPELPKMLSQAEQIAYTNESAAFRGAAIPFPNDPSTYPNNDWFDLLLGPAPIYNADVSITGASENVSYYTSLNYFNQEGIVKTSGIEKYIFRSNLDIRLSDKLKTGFRVNYSYIDQQNGLVGYGNAIATLPTQPIYNEDGSYNGFDEVVGSPWSNPIANMALNTNETFRNNFLGSFYIDYSPSEKWIIRSTFSPDFDNSKQNRFTSSQSPNLLYLGEGGNASVRTVNTKGWNNENTIQYQSEIGENHRITALGGASFQKVSTEIVESEAFGITNDATGFNNLSNSDPTRNILTSDYSGFQIASFFGRLNYAYKDKYLLTLVGRTDGSSVFSDDNKYEFYPSIAAAWKISEEGFMQNQETFGELKLRASYGKSGNQAIDPYRTKGLLVEANTTLNGIQQTGLTLGRPSNPNLTWETTNSLDIALEASMFNGRVFAELNYYYKKTNDLLLDVTIPKQTGFNSQLQNVGSLENKGWEFSLNTTNVRTDNFNWKSTLMLSSNKNKILDLGGVDFIDLVVDELLGSGNTRLIVGESVPVFTGVKFLGTWKSQEEIDASGLRDPQVVGGAKYHDENGDGIISTDDAVVLGSPLPDLIFGFENTLSYKNLDFSFYFQGTQGNEVYNLRMRNHYFNRGEFTKFAEVADRWTPENPTSDIPRAGGDSVTGTPPNSAYVEDGSHIRLKTVRLAYNMPVDKMGMDGVKNATVYLTGTNLLLWSDFRLIDPEGSNFGRNGIGNIAQGYNDGSYPNPRTITLGLNVTF.

Positions 86 to 93 (DEVVVIGY) match the TonB box motif. Positions 97–213 (RKSDLTGSVS…ANGVVLVTTK (117 aa)) constitute a TBDR plug domain. A TBDR beta-barrel domain is found at 220 to 990 (SSKPEVSANI…TITLGLNVTF (771 aa)). Residues 878 to 902 (TPENPTSDIPRAGGDSVTGTPPNSA) form a disordered region. Residues 974 to 990 (GSYPNPRTITLGLNVTF) carry the TonB C-terminal box motif.

The protein belongs to the TonB-dependent receptor family.

The protein resides in the cell outer membrane. TonB-dependent receptor probably involved in ulvan degradation. Ulvan is the main polysaccharide component of the Ulvales (green seaweed) cell wall. It is composed of disaccharide building blocks comprising 3-sulfated rhamnose (Rha3S) linked to D-glucuronic acid (GlcA), L-iduronic acid (IduA), or D-xylose (Xyl). The TonB-dependent receptor may mediate transport of ulvan oligosaccharides from the surface of the outer membrane to the periplasm for subsequent degradation. In Formosa agariphila (strain DSM 15362 / KCTC 12365 / LMG 23005 / KMM 3901 / M-2Alg 35-1), this protein is TonB-dependent receptor P26.